A 370-amino-acid polypeptide reads, in one-letter code: Leucine-rich repeat-containing protein 19 (370 aa).

A signal peptide spans 1–24 (MKVTGITILFWPLSMILLSDKIQS). The Extracellular segment spans residues 25-270 (SKREVQCNFT…SEHEPLGKSW (246 aa)). 4 N-linked (GlcNAc...) asparagine glycosylation sites follow: N32, N37, N62, and N95. 5 LRR repeats span residues 46-71 (KKDV…VLQT), 72-95 (YFLL…GFGN), 96-119 (LSSL…AFLG), 120-143 (LNKL…VFVP), and 145-168 (RSLK…LFHL). In terms of domain architecture, LRRCT spans 176–227 (NLWNCSCSLFNLQNWLNTSNVTLENENITMCSYPNSLQSYNIKTVPHKAECH). Residues N179, N192, N195, N202, N251, and N256 are each glycosylated (N-linked (GlcNAc...) asparagine). Residues 271 to 291 (AFLVGVVVTVLTTSLLIFIAI) traverse the membrane as a helical segment. Over 292–370 (KCPIWYNILL…IDIHELCEEN (79 aa)) the chain is Cytoplasmic.

As to quaternary structure, interacts with TRAF2 and TRAF6. As to expression, expressed in renal collecting duct epithelial cells.

Its subcellular location is the membrane. With respect to regulation, activated by TLR ligands such as LPS, bacterial DNA and peptidoglycan. In terms of biological role, pathogen-recognition receptor which mediates the activation of TRAF2- and TRAF6 NF-kappa-B signaling pathways and induces the expression of pro-inflammatory cytokines. In kidney, prevents infection by uropathogenic bacteria by inducing the production of cytokines, chemokines and antimicrobial substances. In gut, involved in host-microbiota interactions, plays a critical role in promoting the recruitment of immune cells and intestinal inflammation. The protein is Leucine-rich repeat-containing protein 19 of Homo sapiens (Human).